Consider the following 1062-residue polypeptide: Inactive tyrosine-protein kinase 7 (1062 aa).

Positions M1 to A22 are cleaved as a signal peptide. 7 consecutive Ig-like C2-type domains span residues A23–N112, P120–S210, A217–L309, P301–T399, P404–Q489, K495–L578, and G570–L672. Residues A23–T696 lie on the Extracellular side of the membrane. A disulfide bridge connects residues C45 and C93. N98, N108, N176, N206, N260, and N275 each carry an N-linked (GlcNAc...) asparagine glycan. Residues C142 and C192 are joined by a disulfide bond. 2 disulfide bridges follow: C238/C293 and C335/C383. Residues N397, N455, N559, and N638 are each glycosylated (N-linked (GlcNAc...) asparagine). 3 cysteine pairs are disulfide-bonded: C425–C473, C516–C562, and C605–C656. Residues I697 to Y717 traverse the membrane as a helical segment. The Cytoplasmic portion of the chain corresponds to C718–Q1062. Disordered stretches follow at residues Q728–Q750 and N1039–Q1062. Residues A786–Q1062 form an interaction with CTNNB1 region. The region spanning L788–A1058 is the Protein kinase; inactive domain. At S1056 the chain carries Phosphoserine.

The protein belongs to the protein kinase superfamily. Tyr protein kinase family. Insulin receptor subfamily. As to quaternary structure, interacts with CTNNB1. Post-translationally, MMP14 cleaves PTK7 between Pro-613 and Leu-614 generating an N-terminal soluble (70 kDa) fragment and a membrane C-terminal (50 kDa) fragment. Proteolysis by MMP14 regulates PTK7 function in non-canonical Wnt signaling pathway. As to expression, expressed at high levels in lung and un-pregnant uterus among adult tissues, and in the tail, limbs, somites, gut and craniofacial regions among embryonic tissues.

It localises to the membrane. It is found in the cell junction. In terms of biological role, inactive tyrosine kinase involved in Wnt signaling pathway. Component of both the non-canonical (also known as the Wnt/planar cell polarity signaling) and the canonical Wnt signaling pathway. Functions in cell adhesion, cell migration, cell polarity, proliferation, actin cytoskeleton reorganization and apoptosis. Has a role in embryogenesis, epithelial tissue organization and angiogenesis. This chain is Inactive tyrosine-protein kinase 7 (Ptk7), found in Mus musculus (Mouse).